Reading from the N-terminus, the 359-residue chain is Glycerol-1-phosphate dehydrogenase [NAD(P)+] (359 aa).

Residues glycine 107 to aspartate 111 and threonine 129 to serine 132 each bind NAD(+). A substrate-binding site is contributed by aspartate 134. Serine 138 serves as a coordination point for NAD(+). Aspartate 181 contacts substrate. Positions 181 and 261 each coordinate Zn(2+). Substrate is bound at residue histidine 265. Residue histidine 277 coordinates Zn(2+).

This sequence belongs to the glycerol-1-phosphate dehydrogenase family. Zn(2+) is required as a cofactor.

The protein localises to the cytoplasm. It carries out the reaction sn-glycerol 1-phosphate + NAD(+) = dihydroxyacetone phosphate + NADH + H(+). The catalysed reaction is sn-glycerol 1-phosphate + NADP(+) = dihydroxyacetone phosphate + NADPH + H(+). Its pathway is membrane lipid metabolism; glycerophospholipid metabolism. In terms of biological role, catalyzes the NAD(P)H-dependent reduction of dihydroxyacetonephosphate (DHAP or glycerone phosphate) to glycerol 1-phosphate (G1P). The G1P thus generated is used as the glycerophosphate backbone of phospholipids in the cellular membranes of Archaea. The polypeptide is Glycerol-1-phosphate dehydrogenase [NAD(P)+] (Methanoregula boonei (strain DSM 21154 / JCM 14090 / 6A8)).